A 37-amino-acid polypeptide reads, in one-letter code: Large ribosomal subunit protein bL36c (37 aa).

It belongs to the bacterial ribosomal protein bL36 family.

It is found in the plastid. The protein resides in the cyanelle. The chain is Large ribosomal subunit protein bL36c (rpl36) from Cyanophora paradoxa.